The following is a 211-amino-acid chain: MPKPFDLTLYLVTDPRLVAARGLLTTVDAAVKGGATIVQLRDPDAHGRALVEQARALKALLAPLGIPLIINDRVDVAVAADADGVHLGQDDMTPADARAVLGPQRILGLSVGNPAEYAASDLSGVDYLGVGPVKATGTKADAGGAIGAAGVGAVRALTRLPLVGIGGLATADVADVIRAGADGVAVVSSICAASDPEQAARALKAAVLAAR.

4-amino-2-methyl-5-(diphosphooxymethyl)pyrimidine is bound by residues 39–41 (QLR) and N71. Mg(2+)-binding residues include D72 and D91. S110 lines the 4-amino-2-methyl-5-(diphosphooxymethyl)pyrimidine pocket. 136 to 138 (TGT) contacts 2-[(2R,5Z)-2-carboxy-4-methylthiazol-5(2H)-ylidene]ethyl phosphate. 4-amino-2-methyl-5-(diphosphooxymethyl)pyrimidine is bound at residue K139. 2-[(2R,5Z)-2-carboxy-4-methylthiazol-5(2H)-ylidene]ethyl phosphate contacts are provided by residues G167 and 187 to 188 (VS).

The protein belongs to the thiamine-phosphate synthase family. The cofactor is Mg(2+).

The enzyme catalyses 2-[(2R,5Z)-2-carboxy-4-methylthiazol-5(2H)-ylidene]ethyl phosphate + 4-amino-2-methyl-5-(diphosphooxymethyl)pyrimidine + 2 H(+) = thiamine phosphate + CO2 + diphosphate. It catalyses the reaction 2-(2-carboxy-4-methylthiazol-5-yl)ethyl phosphate + 4-amino-2-methyl-5-(diphosphooxymethyl)pyrimidine + 2 H(+) = thiamine phosphate + CO2 + diphosphate. The catalysed reaction is 4-methyl-5-(2-phosphooxyethyl)-thiazole + 4-amino-2-methyl-5-(diphosphooxymethyl)pyrimidine + H(+) = thiamine phosphate + diphosphate. Its pathway is cofactor biosynthesis; thiamine diphosphate biosynthesis; thiamine phosphate from 4-amino-2-methyl-5-diphosphomethylpyrimidine and 4-methyl-5-(2-phosphoethyl)-thiazole: step 1/1. Condenses 4-methyl-5-(beta-hydroxyethyl)thiazole monophosphate (THZ-P) and 2-methyl-4-amino-5-hydroxymethyl pyrimidine pyrophosphate (HMP-PP) to form thiamine monophosphate (TMP). In Xanthobacter autotrophicus (strain ATCC BAA-1158 / Py2), this protein is Thiamine-phosphate synthase.